Reading from the N-terminus, the 148-residue chain is Macrodomain Ter protein (148 aa).

Belongs to the MatP family. Homodimer.

The protein resides in the cytoplasm. In terms of biological role, required for spatial organization of the terminus region of the chromosome (Ter macrodomain) during the cell cycle. Prevents early segregation of duplicated Ter macrodomains during cell division. Binds specifically to matS, which is a 13 bp signature motif repeated within the Ter macrodomain. In Pasteurella multocida (strain Pm70), this protein is Macrodomain Ter protein.